Reading from the N-terminus, the 81-residue chain is Photosystem I iron-sulfur center (81 aa).

4Fe-4S ferredoxin-type domains follow at residues 2–31 (SHSV…MVPW) and 39–68 (IASA…VRVY). [4Fe-4S] cluster-binding residues include Cys-11, Cys-14, Cys-17, Cys-21, Cys-48, Cys-51, Cys-54, and Cys-58.

In terms of assembly, the eukaryotic PSI reaction center is composed of at least 11 subunits. The cofactor is [4Fe-4S] cluster.

It localises to the plastid. The protein resides in the chloroplast thylakoid membrane. The enzyme catalyses reduced [plastocyanin] + hnu + oxidized [2Fe-2S]-[ferredoxin] = oxidized [plastocyanin] + reduced [2Fe-2S]-[ferredoxin]. Its function is as follows. Apoprotein for the two 4Fe-4S centers FA and FB of photosystem I (PSI); essential for photochemical activity. FB is the terminal electron acceptor of PSI, donating electrons to ferredoxin. The C-terminus interacts with PsaA/B/D and helps assemble the protein into the PSI complex. Required for binding of PsaD and PsaE to PSI. PSI is a plastocyanin/cytochrome c6-ferredoxin oxidoreductase, converting photonic excitation into a charge separation, which transfers an electron from the donor P700 chlorophyll pair to the spectroscopically characterized acceptors A0, A1, FX, FA and FB in turn. The chain is Photosystem I iron-sulfur center from Pleurastrum terricola (Filamentous green alga).